The following is a 770-amino-acid chain: Amyloid-beta precursor protein (770 aa).

A signal peptide spans 1 to 17; it reads MLPGLALLLLAAWTARA. At 18 to 701 the chain is on the extracellular side; sequence LEVPTDGNAG…AEDVGSNKGA (684 aa). The GFLD subdomain stretch occupies residues 28-123; sequence LLAEPQIAMF…PYRCLVGEFV (96 aa). An E1 domain is found at 28–189; sequence LLAEPQIAMF…RGVEFVCCPL (162 aa). 6 cysteine pairs are disulfide-bonded: cysteine 38–cysteine 62, cysteine 73–cysteine 117, cysteine 98–cysteine 105, cysteine 133–cysteine 187, cysteine 144–cysteine 174, and cysteine 158–cysteine 186. 96–110 contacts heparin; that stretch reads NWCKRGRKQCKTHPH. The cuBD subdomain stretch occupies residues 131 to 189; sequence DKCKFLHQERMDVCETHLHWHTVAKETCSEKSTNLHDYGMLLPCGIDKFRGVEFVCCPL. Residues histidine 147, histidine 151, and tyrosine 168 each contribute to the Cu(2+) site. The tract at residues 181–188 is zinc-binding; that stretch reads GVEFVCCP. Zn(2+) contacts are provided by glutamate 183, cysteine 186, and cysteine 187. Residues 194–207 are compositionally biased toward acidic residues; that stretch reads DNVDSADAEEDDSD. A disordered region spans residues 194 to 284; it reads DNVDSADAEE…TTTTTTESVE (91 aa). A Phosphoserine; by CK2 modification is found at serine 198. The residue at position 206 (serine 206) is a Phosphoserine; by CK1. A sulfotyrosine mark is found at tyrosine 217 and tyrosine 262. Residues 228–264 are compositionally biased toward acidic residues; that stretch reads VAEEEEVAEVEEEEADDDEDDEDGDEVEEEAEEPYEE. Positions 268-281 are enriched in low complexity; it reads RTTSIATTTTTTTE. Intrachain disulfides connect cysteine 291–cysteine 341, cysteine 300–cysteine 324, and cysteine 316–cysteine 337. In terms of domain architecture, BPTI/Kunitz inhibitor spans 291-341; it reads CSEQAETGPCRAMISRWYFDVTEGKCAPFFYGGCGGNRNNFDTEEYCMAVC. Position 336 is a sulfotyrosine (tyrosine 336). Positions 344 to 365 match the OX-2 motif; it reads VMSQSLRKTTREPLTRDPVKLP. The E2 domain occupies 374 to 565; sequence AVDKYLETPG…EEIQDEVDEL (192 aa). The heparin-binding stretch occupies residues 391-423; the sequence is FQKAKERLEAKHRERMSQVMREWEEAERQAKNL. Serine 441 carries the phosphoserine modification. The segment at 491-522 is heparin-binding; it reads FNMLKKYVRAEQKDRQHTLKHFEHVRMVDPKK. Position 497 is a phosphotyrosine (tyrosine 497). The collagen-binding stretch occupies residues 523–540; the sequence is AAQIRSQVMTHLRVIYER. Asparagine 542 and asparagine 571 each carry an N-linked (GlcNAc...) asparagine glycan. Cu(2+) contacts are provided by histidine 677, tyrosine 681, histidine 684, and histidine 685. Histidine 677, tyrosine 681, histidine 684, and histidine 685 together coordinate Zn(2+). Residues 695 to 722 are interaction with PSEN1; it reads VGSNKGAIIGLMVGGVVIATVIVITLVM. A helical membrane pass occupies residues 702 to 722; the sequence is IIGLMVGGVVIATVIVITLVM. The Cytoplasmic portion of the chain corresponds to 723–770; the sequence is LKKKQYTSIHHGVVEVDAAVTPEERHLSKMQQNGYENPTYKFFEQMQN. The Basolateral sorting signal signature appears at 724 to 734; the sequence is KKKQYTSIHHG. Phosphothreonine is present on threonine 729. Phosphoserine; by APP-kinase I is present on serine 730. Residues 732–751 form an interaction with G(o)-alpha region; that stretch reads HHGVVEVDAAVTPEERHLSK. Position 743 is a phosphothreonine; by CDK5 and MAPK10 (threonine 743). A required for the interaction with KIF5B and for anterograde transport in axons region spans residues 756–770; that stretch reads GYENPTYKFFEQMQN. Tyrosine 757 is modified (phosphotyrosine; by ABL1). Positions 757–762 match the YENPXY motif; contains endocytosis signal motif; it reads YENPTY. Lysine 763 participates in a covalent cross-link: Glycyl lysine isopeptide (Lys-Gly) (interchain with G-Cter in ubiquitin).

This sequence belongs to the APP family. In terms of assembly, binds, via its C-terminus, to the PID domain of several cytoplasmic proteins, including APBB family members, the APBA family, MAPK8IP1, SHC1 and NUMB and DAB1. Binding to DAB1 inhibits its serine phosphorylation. Interacts (via NPXY motif) with DAB2 (via PID domain); the interaction is impaired by tyrosine phosphorylation of the NPXY motif. Also interacts with GPCR-like protein BPP, APPBP1, IB1, KNS2 (via its TPR domains), APPBP2 (via BaSS) and DDB1. In vitro, it binds MAPT via the MT-binding domains. Associates with microtubules in the presence of ATP and in a kinesin-dependent manner. Interacts, through a C-terminal domain, with GNAO1. Amyloid-beta protein 42 binds CHRNA7 in hippocampal neurons. Amyloid-beta associates with HADH2. Interacts with CPEB1, ANKS1B and AGER. Interacts with ITM2B. Interacts with ITM2C. Interacts with IDE. Can form homodimers; dimerization is enhanced in the presence of Cu(2+) ions. Can form homodimers; this is promoted by heparin binding. Amyloid-beta protein 40 interacts with S100A9. CTF-alpha product of APP interacts with GSAP. Isoform APP695 interacts with SORL1 (via N-terminal ectodomain); this interaction retains APP in the trans-Golgi network and reduces processing into soluble APP-alpha and amyloid-beta peptides. Isoform APP770 interacts with SORL1. The C99 fragment also interacts with SORL1. Interacts with PLD3. Interacts with VDAC1. Interacts with NSG1; could regulate APP processing. Amyloid-beta protein 42 interacts with FPR2. Interacts (via transmembrane region) with PSEN1; the interaction is direct. Interacts with LRRK2. Interacts (via cytoplasmic domain) with KIF5B. Interacts (via C-terminus) with APBB2/FE65L1 (via C-terminus). Interacts (via intracellular domain) with APBB3. In terms of processing, proteolytically processed under normal cellular conditions. Cleavage either by alpha-secretase, beta-secretase or theta-secretase leads to generation and extracellular release of soluble APP peptides, S-APP-alpha and S-APP-beta, and the retention of corresponding membrane-anchored C-terminal fragments, C80, C83 and C99. Subsequent processing of C80 and C83 by gamma-secretase yields P3 peptides. This is the major secretory pathway and is non-amyloidogenic. Alternatively, presenilin/nicastrin-mediated gamma-secretase processing of C99 releases the amyloid-beta proteins, amyloid-beta protein 40 and amyloid-beta protein 42, major components of amyloid plaques, and the cytotoxic C-terminal fragments, gamma-CTF(50), gamma-CTF(57) and gamma-CTF(59). PSEN1 cleavage is more efficient with C83 than with C99 as substrate (in vitro). Amyloid-beta protein 40 and Amyloid-beta protein 42 are cleaved by ACE. Many other minor amyloid-beta peptides, amyloid-beta 1-X peptides, are found in cerebral spinal fluid (CSF) including the amyloid-beta X-15 peptides, produced from the cleavage by alpha-secretase. Proteolytically cleaved by caspases during neuronal apoptosis. Cleavage at Asp-739 by either caspase-3, -8 or -9 results in the production of the neurotoxic C31 peptide and the increased production of amyloid-beta peptides. Post-translationally, N- and O-glycosylated. In terms of processing, phosphorylation in the C-terminal on tyrosine, threonine and serine residues is neuron-specific. Phosphorylation can affect APP processing, neuronal differentiation and interaction with other proteins. Phosphorylated on Thr-743 in neuronal cells by Cdc5 kinase and Mapk10, in dividing cells by Cdc2 kinase in a cell-cycle dependent manner with maximal levels at the G2/M phase and, in vitro, by GSK-3-beta. The Thr-743 phosphorylated form causes a conformational change which reduces binding of Fe65 family members. In dopaminergic (DA) neurons, phosphorylation on Thr-743 by LRKK2 promotes the production and the nuclear translocation of the APP intracellular domain (AICD) which induces DA neuron apoptosis. Phosphorylation on Tyr-757 is required for SHC binding. Phosphorylated in the extracellular domain by casein kinases on both soluble and membrane-bound APP. This phosphorylation is inhibited by heparin. Trophic-factor deprivation triggers the cleavage of surface APP by beta-secretase to release sAPP-beta which is further cleaved to release an N-terminal fragment of APP (N-APP). Post-translationally, amyloid-beta peptides are degraded by IDE. In terms of processing, sulfated on tyrosine residues.

The protein resides in the cell membrane. The protein localises to the membrane. It localises to the perikaryon. Its subcellular location is the cell projection. It is found in the growth cone. The protein resides in the clathrin-coated pit. The protein localises to the early endosome. It localises to the cytoplasmic vesicle. Its subcellular location is the endoplasmic reticulum. It is found in the golgi apparatus. The protein resides in the secreted. The protein localises to the cell surface. It localises to the nucleus. Its subcellular location is the cytoplasm. Functions as a cell surface receptor and performs physiological functions on the surface of neurons relevant to neurite growth, neuronal adhesion and axonogenesis. Interaction between APP molecules on neighboring cells promotes synaptogenesis. Involved in cell mobility and transcription regulation through protein-protein interactions. Can promote transcription activation through binding to APBB1-KAT5 and inhibit Notch signaling through interaction with Numb. Couples to apoptosis-inducing pathways such as those mediated by G(o) and JIP. Inhibits G(o)-alpha ATPase activity. Acts as a kinesin I membrane receptor, mediating the axonal transport of beta-secretase and presenilin 1. By acting as a kinesin I membrane receptor, plays a role in axonal anterograde transport of cargo towards synapses in axons. May be involved in copper homeostasis/oxidative stress through copper ion reduction. In vitro, copper-metallated APP induces neuronal death directly or is potentiated through Cu(2+)-mediated low-density lipoprotein oxidation. Can regulate neurite outgrowth through binding to components of the extracellular matrix such as heparin and collagen I and IV. Induces a AGER-dependent pathway that involves activation of p38 MAPK, resulting in internalization of amyloid-beta peptide and mitochondrial dysfunction in cultured cortical neurons. Provides Cu(2+) ions for GPC1 which are required for release of nitric oxide (NO) and subsequent degradation of the heparan sulfate chains on GPC1. Its function is as follows. Amyloid-beta peptides are lipophilic metal chelators with metal-reducing activity. Binds transient metals such as copper, zinc and iron. In terms of biological role, the gamma-CTF peptides as well as the caspase-cleaved peptides, including C31, are potent enhancers of neuronal apoptosis. The protein is Amyloid-beta precursor protein of Macaca fascicularis (Crab-eating macaque).